The sequence spans 1055 residues: Cell-division control histidine kinase PdhS (1055 aa).

Positions 1-626 (MSGSYPFIDI…RANGSEEPVD (626 aa)) are important for polar localization. The interval 419-439 (DDSPVATLPKPPLDIAPTPGR) is disordered. The tract at residues 627-1055 (AHLNAISWRE…AFPPTRVLAD (429 aa)) is interaction with DivK. Residues 679–750 (HVEELKTILD…YLHGLSGNGV (72 aa)) enclose the PAS domain. A Histidine kinase domain is found at 822–1051 (RISHEIRTPL…VVEIAFPPTR (230 aa)). Residue His825 is modified to Phosphohistidine; by autocatalysis.

In terms of assembly, interacts with DivK.

The protein localises to the cytoplasm. It catalyses the reaction ATP + protein L-histidine = ADP + protein N-phospho-L-histidine.. Functionally, functions as a polar differentiation marker. Essential protein that, by localizing in the old pole of dividing cells, controls cell division and maturation, probably through control of DivK phosphorylation status and cellular distribution, which in turn regulates CtrA, a transcriptional regulator of the minB operon. The asymmetrical localization of this protein is probably required for cells to enter a new division cycle. In Brucella anthropi (strain ATCC 49188 / DSM 6882 / CCUG 24695 / JCM 21032 / LMG 3331 / NBRC 15819 / NCTC 12168 / Alc 37) (Ochrobactrum anthropi), this protein is Cell-division control histidine kinase PdhS (pdhS).